The primary structure comprises 169 residues: MAPSEDPRDWRANLKGTIRETGLETSSGGKLAGHQKTVPTAHLTFVIDCTHGKQLSLAATASPPQAPSPNRGLVTPPMKTYIVFCGENWPHLTRVTPMGGGCLAQARATLPLCRGSVASASFPVSPLCPQEVPEAKGKPVKAAPVRSSTWGTVKDSLKALSSCVCGQAD.

In terms of assembly, interacts with 14-3-3 proteins. As to expression, expressed in breast tumors with a higher expression level in estrogen receptor-positive cancers.

May regulate the transcriptional function of androgen and estrogen receptors. The sequence is that of Steroid receptor-associated and regulated protein from Homo sapiens (Human).